The chain runs to 299 residues: Trimeric intracellular cation channel type A (299 aa).

Residues 1–18 (MELLSALSLGELALSFSR) lie on the Lumenal side of the membrane. A helical transmembrane segment spans residues 19 to 39 (VPLFPVFDLSYFIVSILYLKY). Residues 40 to 51 (EPGAVELSRRHP) are Cytoplasmic-facing. Residues 52 to 72 (IASWLCAMLHCFGSYILADLL) traverse the membrane as a helical segment. Topologically, residues 73-85 (LGEPLIDYFSNNS) are lumenal. Residue G74 participates in Ca(2+) binding. A helical membrane pass occupies residues 86 to 106 (SILLASAVWYLIFFCPLDLFY). Residues 107–144 (KCVCFLPVKLIFVAMKEVVRVRKIAVGIHHAHHHYHHG) are Cytoplasmic-facing. Residues K122 and R126 each coordinate a 1,2-diacyl-sn-glycero-3-phospho-(1D-myo-inositol-4,5-bisphosphate). A helical transmembrane segment spans residues 145 to 165 (WFVMIATGWVKGSGVALMSNF). At 166–178 (EQLLRGVWKPETN) the chain is on the lumenal side. Residues 179 to 199 (EILHMSFPTKASLYGAILFTL) form a helical membrane-spanning segment. Residues 200–209 (QQTRWLPVSK) are Cytoplasmic-facing. Residues 210-230 (ASLIFIFTLFMVSCKVFLTAT) form a helical membrane-spanning segment. Residues 231–234 (HSHS) are Lumenal-facing. Residues 235 to 255 (SPFDALEGYICPVLFGSACGG) form a helical membrane-spanning segment. At 256 to 299 (DHHHDNHGGSHSGGGPGAQHSAMPAKSKEELSEGSRKKKAKKAD) the chain is on the cytoplasmic side. The tract at residues 260-299 (DNHGGSHSGGGPGAQHSAMPAKSKEELSEGSRKKKAKKAD) is disordered. The span at 281-290 (KSKEELSEGS) shows a compositional bias: basic and acidic residues.

It belongs to the TMEM38 family. Homotrimer; conformation seems to be controled by binding to diacylglycerol (DAG).

It is found in the sarcoplasmic reticulum membrane. The protein localises to the nucleus membrane. The enzyme catalyses K(+)(in) = K(+)(out). Its activity is regulated as follows. Channel activity is activated by a change of voltage within the sarcoplasmic reticulum lumen and blocked by luminal high Ca(2+) levels. In terms of biological role, intracellular monovalent cation channel required for maintenance of rapid intracellular calcium release. Acts as a potassium counter-ion channel that functions in synchronization with calcium release from intracellular stores. Opened by a change of voltage within the sarcoplasmic reticulum lumen. This chain is Trimeric intracellular cation channel type A, found in Homo sapiens (Human).